The primary structure comprises 143 residues: Large ribosomal subunit protein uL15 (143 aa).

Residues 20–52 (GRGIGSGKGKTAGRGHKGQHSRAGGYHKVGFEG) form a disordered region. A compositionally biased stretch (basic residues) spans 30 to 39 (TAGRGHKGQH).

It belongs to the universal ribosomal protein uL15 family. As to quaternary structure, part of the 50S ribosomal subunit.

Its function is as follows. Binds to the 23S rRNA. This is Large ribosomal subunit protein uL15 from Coxiella burnetii (strain CbuK_Q154) (Coxiella burnetii (strain Q154)).